Consider the following 145-residue polypeptide: Synaptojanin-2-binding protein (145 aa).

Over M1–G117 the chain is Cytoplasmic. The region spanning E13–L100 is the PDZ domain. A helical transmembrane segment spans residues V118 to F138. Over V139–L145 the chain is Mitochondrial intermembrane.

In terms of assembly, binds (via the PDZ domain) to isoform 2A of SYNJ2 (via the unique motif in the C-terminus). Interacts (via C-terminus) with RALBP1. Interacts (via PDZ domain) with ACVR2A (via C-terminus) and ACVR2B (via C-terminus). Forms a ternary complex with ACVR2A and RALBP1. Interacts with MAPK12. Interacts with DLL1; enhances DLL1 protein stability, and promotes notch signaling in endothelial cells. In terms of tissue distribution, widely expressed.

The protein localises to the mitochondrion outer membrane. Its function is as follows. Regulates endocytosis of activin type 2 receptor kinases through the Ral/RALBP1-dependent pathway and may be involved in suppression of activin-induced signal transduction. In Rattus norvegicus (Rat), this protein is Synaptojanin-2-binding protein (Synj2bp).